We begin with the raw amino-acid sequence, 231 residues long: Phosphatidylserine decarboxylase proenzyme (231 aa).

The active-site Schiff-base intermediate with substrate; via pyruvic acid is serine 189. A Pyruvic acid (Ser); by autocatalysis modification is found at serine 189.

It belongs to the phosphatidylserine decarboxylase family. PSD-A subfamily. Heterodimer of a large membrane-associated beta subunit and a small pyruvoyl-containing alpha subunit. Pyruvate is required as a cofactor. Post-translationally, is synthesized initially as an inactive proenzyme. Formation of the active enzyme involves a self-maturation process in which the active site pyruvoyl group is generated from an internal serine residue via an autocatalytic post-translational modification. Two non-identical subunits are generated from the proenzyme in this reaction, and the pyruvate is formed at the N-terminus of the alpha chain, which is derived from the carboxyl end of the proenzyme. The post-translation cleavage follows an unusual pathway, termed non-hydrolytic serinolysis, in which the side chain hydroxyl group of the serine supplies its oxygen atom to form the C-terminus of the beta chain, while the remainder of the serine residue undergoes an oxidative deamination to produce ammonia and the pyruvoyl prosthetic group on the alpha chain.

The protein localises to the cell membrane. The enzyme catalyses a 1,2-diacyl-sn-glycero-3-phospho-L-serine + H(+) = a 1,2-diacyl-sn-glycero-3-phosphoethanolamine + CO2. Its pathway is phospholipid metabolism; phosphatidylethanolamine biosynthesis; phosphatidylethanolamine from CDP-diacylglycerol: step 2/2. Functionally, catalyzes the formation of phosphatidylethanolamine (PtdEtn) from phosphatidylserine (PtdSer). The polypeptide is Phosphatidylserine decarboxylase proenzyme (Chelativorans sp. (strain BNC1)).